A 331-amino-acid chain; its full sequence is Lipoyl synthase (331 aa).

The [4Fe-4S] cluster site is built by C57, C62, C68, C83, C87, C90, and S294. The region spanning 69–283 (WEDREATFLI…KAEAEAIGFL (215 aa)) is the Radical SAM core domain.

This sequence belongs to the radical SAM superfamily. Lipoyl synthase family. The cofactor is [4Fe-4S] cluster.

The protein resides in the cytoplasm. The catalysed reaction is [[Fe-S] cluster scaffold protein carrying a second [4Fe-4S](2+) cluster] + N(6)-octanoyl-L-lysyl-[protein] + 2 oxidized [2Fe-2S]-[ferredoxin] + 2 S-adenosyl-L-methionine + 4 H(+) = [[Fe-S] cluster scaffold protein] + N(6)-[(R)-dihydrolipoyl]-L-lysyl-[protein] + 4 Fe(3+) + 2 hydrogen sulfide + 2 5'-deoxyadenosine + 2 L-methionine + 2 reduced [2Fe-2S]-[ferredoxin]. It participates in protein modification; protein lipoylation via endogenous pathway; protein N(6)-(lipoyl)lysine from octanoyl-[acyl-carrier-protein]: step 2/2. Its function is as follows. Catalyzes the radical-mediated insertion of two sulfur atoms into the C-6 and C-8 positions of the octanoyl moiety bound to the lipoyl domains of lipoate-dependent enzymes, thereby converting the octanoylated domains into lipoylated derivatives. The protein is Lipoyl synthase of Clavibacter michiganensis subsp. michiganensis (strain NCPPB 382).